A 258-amino-acid chain; its full sequence is Mediator of RNA polymerase II transcription subunit 7 (258 aa).

Disordered stretches follow at residues 1–39 (MLPG…PPPH) and 202–243 (EKET…PPSV). Positions 203-217 (KETEEDEEMKEDDEE) are enriched in acidic residues. Polar residues predominate over residues 220–229 (STSSSEGNQK).

Belongs to the Mediator complex subunit 7 family. Component of the Mediator complex.

It localises to the nucleus. Its function is as follows. Component of the Mediator complex, a coactivator involved in the regulated transcription of nearly all RNA polymerase II-dependent genes. Mediator functions as a bridge to convey information from gene-specific regulatory proteins to the basal RNA polymerase II transcription machinery. Mediator is recruited to promoters by direct interactions with regulatory proteins and serves as a scaffold for the assembly of a functional preinitiation complex with RNA polymerase II and the general transcription factors. The chain is Mediator of RNA polymerase II transcription subunit 7 (let-49) from Caenorhabditis briggsae.